The primary structure comprises 155 residues: Fibroblast growth factor 2 (155 aa).

The propeptide occupies 1–9 (MAAGSITTL). Positions 1–20 (MAAGSITTLPALPEDGGSGA) are disordered. Asn-36 contributes to the heparin binding site. The Cell attachment site; atypical motif lies at 46 to 48 (DGR). Tyr-82 is modified (phosphotyrosine; by TEC). The Cell attachment site; atypical signature appears at 88–90 (DGR). Lys-95 is covalently cross-linked (Glycyl lysine isopeptide (Lys-Gly) (interchain with G-Cter in SUMO1)). Residues 128 to 144 (KRTGQYKLGPKTGPGQK) form a heparin-binding region.

The protein belongs to the heparin-binding growth factors family. Monomer. Homodimer. Interacts with FGFR1, FGFR2, FGFR3 and FGFR4. Affinity between fibroblast growth factors (FGFs) and their receptors is increased by heparan sulfate glycosaminoglycans that function as coreceptors. Interacts with CSPG4, FGFBP1 and TEC. Found in a complex with FGFBP1, FGF1 and FGF2. Interacts with FGFBP3. Interacts with integrin ITGAV:ITGB3; the interaction is required for FGF2 signaling. Interacts with SNORC (via the extracellular domain). Interacts with glypican GPC3. Post-translationally, phosphorylation at Tyr-82 regulates FGF2 unconventional secretion.

The protein localises to the secreted. The protein resides in the nucleus. Functionally, acts as a ligand for FGFR1, FGFR2, FGFR3 and FGFR4. Also acts as an integrin ligand which is required for FGF2 signaling. Binds to integrin ITGAV:ITGB3. Plays an important role in the regulation of cell survival, cell division, cell differentiation and cell migration. Functions as a potent mitogen in vitro. Can induce angiogenesis. Mediates phosphorylation of ERK1/2 and thereby promotes retinal lens fiber differentiation. The sequence is that of Fibroblast growth factor 2 (FGF2) from Bos taurus (Bovine).